The chain runs to 294 residues: Transcription termination/antitermination protein NusG (294 aa).

Positions 1-91 are disordered; sequence MSDPNLNDAV…EEAEPAAPVD (91 aa). Positions 25–39 are enriched in acidic residues; it reads DIVEAADSVDPDQAE. The span at 40 to 53 shows a compositional bias: low complexity; it reads AADLAAGEPAERAA. The span at 59 to 85 shows a compositional bias: acidic residues; the sequence is DDSDEDDAAAEEAVEADDESADEEEAE.

This sequence belongs to the NusG family.

Its function is as follows. Participates in transcription elongation, termination and antitermination. This Streptomyces griseus protein is Transcription termination/antitermination protein NusG.